The sequence spans 948 residues: Valine--tRNA ligase (948 aa).

The 'HIGH' region motif lies at 40 to 50 (PNVTGSLHMGH). Positions 551-555 (KMSKS) match the 'KMSKS' region motif. Lysine 554 lines the ATP pocket. Residues 879-947 (LIDKGAELAR…LAEQHARISS (69 aa)) are a coiled coil.

This sequence belongs to the class-I aminoacyl-tRNA synthetase family. ValS type 1 subfamily. As to quaternary structure, monomer.

The protein resides in the cytoplasm. The enzyme catalyses tRNA(Val) + L-valine + ATP = L-valyl-tRNA(Val) + AMP + diphosphate. Its function is as follows. Catalyzes the attachment of valine to tRNA(Val). As ValRS can inadvertently accommodate and process structurally similar amino acids such as threonine, to avoid such errors, it has a 'posttransfer' editing activity that hydrolyzes mischarged Thr-tRNA(Val) in a tRNA-dependent manner. This is Valine--tRNA ligase from Pseudomonas fluorescens (strain ATCC BAA-477 / NRRL B-23932 / Pf-5).